A 133-amino-acid chain; its full sequence is Phosphoribosyl-AMP cyclohydrolase (133 aa).

Residue D82 coordinates Mg(2+). Residue C83 coordinates Zn(2+). 2 residues coordinate Mg(2+): D84 and D86. Residues C99 and C106 each contribute to the Zn(2+) site.

This sequence belongs to the PRA-CH family. Homodimer. The cofactor is Mg(2+). Zn(2+) is required as a cofactor.

It is found in the cytoplasm. The catalysed reaction is 1-(5-phospho-beta-D-ribosyl)-5'-AMP + H2O = 1-(5-phospho-beta-D-ribosyl)-5-[(5-phospho-beta-D-ribosylamino)methylideneamino]imidazole-4-carboxamide. It participates in amino-acid biosynthesis; L-histidine biosynthesis; L-histidine from 5-phospho-alpha-D-ribose 1-diphosphate: step 3/9. Its function is as follows. Catalyzes the hydrolysis of the adenine ring of phosphoribosyl-AMP. The sequence is that of Phosphoribosyl-AMP cyclohydrolase from Rhodospirillum centenum (strain ATCC 51521 / SW).